The following is a 480-amino-acid chain: 3-isopropylmalate dehydratase large subunit (480 aa).

[4Fe-4S] cluster is bound by residues cysteine 361, cysteine 421, and cysteine 424.

It belongs to the aconitase/IPM isomerase family. LeuC type 1 subfamily. Heterodimer of LeuC and LeuD. [4Fe-4S] cluster is required as a cofactor.

The enzyme catalyses (2R,3S)-3-isopropylmalate = (2S)-2-isopropylmalate. It functions in the pathway amino-acid biosynthesis; L-leucine biosynthesis; L-leucine from 3-methyl-2-oxobutanoate: step 2/4. Catalyzes the isomerization between 2-isopropylmalate and 3-isopropylmalate, via the formation of 2-isopropylmaleate. In Corynebacterium diphtheriae (strain ATCC 700971 / NCTC 13129 / Biotype gravis), this protein is 3-isopropylmalate dehydratase large subunit.